A 105-amino-acid polypeptide reads, in one-letter code: MIKSELVQRIAEHNPHLYQRDVENIVNAILDEIVAALARGDRVELRGFGAFSVKHRPARAGRNPRTGAHVPVDQKSVPFFKTGKEMRERLNRDNPEGAAADDADD.

Belongs to the bacterial histone-like protein family. In terms of assembly, heterodimer of an alpha and a beta chain.

Its function is as follows. This protein is one of the two subunits of integration host factor, a specific DNA-binding protein that functions in genetic recombination as well as in transcriptional and translational control. This chain is Integration host factor subunit beta, found in Bradyrhizobium sp. (strain ORS 278).